Consider the following 411-residue polypeptide: Meiotic driver wtf33 (411 aa).

Positions 1–95 are disordered; sequence MKNKYYPLRS…ENHSSGTADN (95 aa). The segment covering 11 to 29 has biased composition (basic and acidic residues); it reads SMDELSTKNDNEIDLEKGP. Over residues 57–72 the composition is skewed to polar residues; it reads GANNPNLFNTDESTTP. A run of 6 helical transmembrane segments spans residues 104–124, 137–157, 244–264, 281–301, 303–323, and 336–356; these read AILS…YLTY, WVYF…LWCF, EMMI…FGCV, TISA…WTLW, ALSG…LVNG, and GYEI…LYEM.

This sequence belongs to the WTF family. In terms of assembly, homomer. Forms protein aggregates. The two isoforms can interact with each other and with themselves. High sequence similarity is required for their interaction.

The protein resides in the spore membrane. Its subcellular location is the vacuole membrane. The protein localises to the ascus epiplasm. It localises to the cytoplasm. It is found in the endoplasmic reticulum membrane. Promotes unequal transmission of alleles from the parental zygote to progeny spores by acting as poison/antidote system where the poison and antidote proteins are produced from the same locus; the poison component is trans-acting and targets all spores within an ascus whereas the antidote component is spore-specific, leading to poisoning of all progeny that do not inherit the allele. Its function is as follows. Localizes isoform 2 to the vacuole thereby facilitating its degradation. In terms of biological role, forms toxic aggregates that disrupt spore maturation. This Schizosaccharomyces kambucha (Fission yeast) protein is Meiotic driver wtf33.